A 176-amino-acid chain; its full sequence is Oleosin Ara h 14.0103 (176 aa).

Position 2 is an N-acetylalanine; alternate (Ala2). 3 helical membrane-spanning segments follow: residues 50–70 (IIAV…SGLS), 75–95 (IIGL…IVPA), and 96–116 (VVTI…GLTG). The segment at 156–176 (KTKDAGQEIQTKAQDVKRSSS) is disordered.

Belongs to the oleosin family. In terms of tissue distribution, expressed in seeds (at protein level).

The protein localises to the lipid droplet. The protein resides in the membrane. Functionally, may have a structural role to stabilize the lipid body during desiccation of the seed by preventing coalescence of the oil. Probably interacts with both lipid and phospholipid moieties of lipid bodies. May also provide recognition signals for specific lipase anchorage in lipolysis during seedling growth. The protein is Oleosin Ara h 14.0103 of Arachis hypogaea (Peanut).